Here is a 258-residue protein sequence, read N- to C-terminus: Imidazole glycerol phosphate synthase subunit HisF (258 aa).

Active-site residues include D12 and D131.

The protein belongs to the HisA/HisF family. As to quaternary structure, heterodimer of HisH and HisF.

Its subcellular location is the cytoplasm. The enzyme catalyses 5-[(5-phospho-1-deoxy-D-ribulos-1-ylimino)methylamino]-1-(5-phospho-beta-D-ribosyl)imidazole-4-carboxamide + L-glutamine = D-erythro-1-(imidazol-4-yl)glycerol 3-phosphate + 5-amino-1-(5-phospho-beta-D-ribosyl)imidazole-4-carboxamide + L-glutamate + H(+). The protein operates within amino-acid biosynthesis; L-histidine biosynthesis; L-histidine from 5-phospho-alpha-D-ribose 1-diphosphate: step 5/9. IGPS catalyzes the conversion of PRFAR and glutamine to IGP, AICAR and glutamate. The HisF subunit catalyzes the cyclization activity that produces IGP and AICAR from PRFAR using the ammonia provided by the HisH subunit. The sequence is that of Imidazole glycerol phosphate synthase subunit HisF from Arthrobacter sp. (strain FB24).